Consider the following 301-residue polypeptide: N-carbamoylputrescine amidase (301 aa).

Positions valine 11–leucine 269 constitute a CN hydrolase domain. Catalysis depends on glutamate 50, which acts as the Proton acceptor. The active-site Proton donor is lysine 123. The Nucleophile role is filled by cysteine 160.

It belongs to the carbon-nitrogen hydrolase superfamily. Homooctamer.

It catalyses the reaction N-carbamoylputrescine + H2O + 2 H(+) = putrescine + NH4(+) + CO2. It participates in amine and polyamine biosynthesis; putrescine biosynthesis via agmatine pathway; putrescine from N-carbamoylputrescine (amidase route): step 1/1. Functionally, involved in polyamine biosynthesis. This Oryza sativa subsp. japonica (Rice) protein is N-carbamoylputrescine amidase (CPA).